The sequence spans 55 residues: Large ribosomal subunit protein bL33C (55 aa).

Belongs to the bacterial ribosomal protein bL33 family.

This chain is Large ribosomal subunit protein bL33C, found in Kineococcus radiotolerans (strain ATCC BAA-149 / DSM 14245 / SRS30216).